The primary structure comprises 276 residues: Small ribosomal subunit protein uS2 (276 aa).

The protein belongs to the universal ribosomal protein uS2 family.

In Chlamydia caviae (strain ATCC VR-813 / DSM 19441 / 03DC25 / GPIC) (Chlamydophila caviae), this protein is Small ribosomal subunit protein uS2.